The following is a 365-amino-acid chain: Peptide chain release factor 2 (365 aa).

The residue at position 252 (Gln252) is an N5-methylglutamine.

Belongs to the prokaryotic/mitochondrial release factor family. Post-translationally, methylated by PrmC. Methylation increases the termination efficiency of RF2.

The protein resides in the cytoplasm. In terms of biological role, peptide chain release factor 2 directs the termination of translation in response to the peptide chain termination codons UGA and UAA. This is Peptide chain release factor 2 (prfB) from Salmonella typhimurium (strain LT2 / SGSC1412 / ATCC 700720).